A 517-amino-acid polypeptide reads, in one-letter code: Sphingolipid C9-methyltransferase A (517 aa).

Transmembrane regions (helical) follow at residues Leu-58–Leu-78 and Thr-80–Ala-100. S-adenosyl-L-methionine contacts are provided by residues Tyr-223 to Thr-224, Thr-286 to Gln-291, and Tyr-316 to Arg-317. An N-linked (GlcNAc...) asparagine glycan is attached at Asn-290. N-linked (GlcNAc...) asparagine glycosylation is present at Asn-478.

The protein belongs to the CFA/CMAS family.

It is found in the membrane. The enzyme catalyses a (4E,8E)-4-sphinga-4,8-dienine ceramide + S-adenosyl-L-methionine = a 9-methyl-(4E,8E)-sphinga-4,8-dienine ceramide + S-adenosyl-L-homocysteine + H(+). It participates in lipid metabolism; sphingolipid metabolism. Its function is as follows. Catalyzes methylation of the sphingoid base component of glucosylceramides (GluCers) at the C9-position. Sphingolipid C9-methylation requires 4,8-desaturated ceramides as substrates. Glucosylceramides play important roles in growth, differentiation and pathogenicity. The methyl group at the C9-position distinguishes fungal glucosylceramides from those of plants and animals and may thus play a role in host-pathogen interactions enabling the host to recognize the fungal attack and initiate specific defense responses. The sequence is that of Sphingolipid C9-methyltransferase A from Emericella nidulans (strain FGSC A4 / ATCC 38163 / CBS 112.46 / NRRL 194 / M139) (Aspergillus nidulans).